The sequence spans 1052 residues: SWI/SNF-related matrix-associated actin-dependent regulator of chromatin subfamily A member 5 (1052 aa).

Over residues M1–S15 the composition is skewed to pro residues. Positions M1–K83 are disordered. S2 is modified (N-acetylserine). Low complexity predominate over residues A16–D55. S66 bears the Phosphoserine mark. Positions K69–K83 are enriched in basic and acidic residues. K83 participates in a covalent cross-link: Glycyl lysine isopeptide (Lys-Gly) (interchain with G-Cter in SUMO2). At T113 the chain carries Phosphothreonine. S116, S137, and S171 each carry phosphoserine. Positions I192–D357 constitute a Helicase ATP-binding domain. D205–T212 contacts ATP. Positions D308–H311 match the DEAH box motif. K440 carries the N6-acetyllysine modification. A Helicase C-terminal domain is found at V487–V638. Glycyl lysine isopeptide (Lys-Gly) (interchain with G-Cter in SUMO2) cross-links involve residues K644, K647, K694, K722, and K735. Phosphoserine occurs at positions 755 and 825. 2 SANT domains span residues Q840–N892 and K943–L1007. K966 is covalently cross-linked (Glycyl lysine isopeptide (Lys-Gly) (interchain with G-Cter in SUMO2)). Positions L1015–L1052 are disordered. Positions K1023–K1034 are enriched in basic residues. The span at R1035 to R1044 shows a compositional bias: basic and acidic residues.

This sequence belongs to the SNF2/RAD54 helicase family. ISWI subfamily. Component of the ACF-5 ISWI chromatin-remodeling complex (also called the ACF/WCRF complex) at least composed of SMARCA5/SNF2H and BAZ1A/ACF1, which regulates the spacing of histone octamers on the DNA template to facilitate access to DNA. Within the complex interacts with BAZ1A/ACF1; the interaction is direct and is required to slide nucleosomes from end to center positions on a DNA template in an ATP-dependent manner. Component of the CHRAC ISWI chromatin-remodeling complex at least composed of SMARCA5/SNF2H, BAZ1A/ACF1, CHRAC1 and POLE3; the complex preferentially binds DNA through the CHRAC1-POLE3 heterodimer and possesses ATP-dependent nucleosome-remodeling activity. Within the complex interacts with BAZ1A/ACF1; the interaction is direct and promotes the interaction with the POLE3-CHRAC1 heterodimer. Within the complex interacts with the POLE3-CHRAC1 heterodimer; the interaction is direct and enhances nucleosome sliding activity by the SMARCA5/SNF2H and BAZ1A/ACF1 interaction. Neither POLE3 nor CHRAC1 enhances nucleosome sliding activity of the ACF-5 ISWI chromatin remodeling complex. Component of the WICH-5 ISWI chromatin-remodeling complex (also called the WICH complex) at least composed of SMARCA5/SNF2H and BAZ1B/WSTF, which regulates the spacing of histone octamers on the DNA template to facilitate access to DNA. Within the complex interacts with BAZ1B/WSTF. Component of the NoRC-5 ISWI chromatin-remodeling complex (also called the NoRC chromatin-remodeling complex) at least composed of SMARCA5/SNF2H and BAZ2A/TIP5; the complex suppresses rDNA transcription by a combination of nucleosome remodeling, histone deacetylation, and DNA methylation. Within the complex interacts with BAZ2A/TIP5. Within the complex interacts with HDAC1. Component of the BRF-5 ISWI chromatin-remodeling complex at least composed of SMARCA5/SNF2H and BAZ2B. Within the complex interacts with BAZ2B. Component of the NURF-5 ISWI chromatin-remodeling complex at least composed of SMARCA5/SNF2H and BPTF. Within the complex interacts with BPFT. Component of the CERF-5 ISWI chromatin-remodeling complex at least composed of SMARCA5/SNF2H and CECR2. LUZP1 is detected as part of the CERF-5 complex in embryonic stem cells where it is involved in complex stabilization but is not detected in the complex in the testis. Within the complex interacts with CECR2. Component of the RSF-5 ISWI chromatin-remodeling complex (also called the RSF complex) at least composed of SMARCA5/SNF2H and RSF1. Within the complex interacts with RSF1. Interacts with the cohesin complex component RAD21; the interaction is direct. Interacts with the NuRD complex components HDAC2, RBBP4 and CHD4; the interactions are direct. Interacts with PCNA. Component of the B-WICH complex, at least composed of SMARCA5/SNF2H, BAZ1B/WSTF, SF3B1, DEK, MYO1C, ERCC6, MYBBP1A and DDX21 which positively regulates RNA polymerase III transcription. Interacts with MYO1C. Interacts with BEND3. Interacts with SIRT6; promoting recruitment to DNA damage sites. As to quaternary structure, (Microbial infection) Interacts with JC virus small t antigen. In terms of assembly, (Microbial infection) Interacts with Epstein Barr virus (EBV) lytic switch protein BZLF1; this interaction participates to the activation of early lytic viral genes by BZLF1. Ubiquitously expressed.

It is found in the nucleus. The protein resides in the chromosome. It carries out the reaction ATP + H2O = ADP + phosphate + H(+). Functionally, ATPase that possesses intrinsic ATP-dependent nucleosome-remodeling activity. Catalytic subunit of ISWI chromatin-remodeling complexes, which form ordered nucleosome arrays on chromatin and facilitate access to DNA during DNA-templated processes such as DNA replication, transcription, and repair; this may require intact histone H4 tails. Within the ISWI chromatin-remodeling complexes, slides edge- and center-positioned histone octamers away from their original location on the DNA template. Catalytic activity and histone octamer sliding propensity is regulated and determined by components of the ISWI chromatin-remodeling complexes. The BAZ1A/ACF1-, BAZ1B/WSTF-, BAZ2A/TIP5- and BAZ2B-containing ISWI chromatin-remodeling complexes regulate the spacing of nucleosomes along the chromatin and have the ability to slide mononucleosomes to the center of a DNA template in an ATP-dependent manner. The CECR2- and RSF1-containing ISWI chromatin-remodeling complexes do not have the ability to slide mononucleosomes to the center of a DNA template. Binds to core histones together with RSF1, and is required for the assembly of regular nucleosome arrays by the RSF-5 ISWI chromatin-remodeling complex. Involved in DNA replication and together with BAZ1A/ACF1 is required for replication of pericentric heterochromatin in S-phase. Probably plays a role in repression of RNA polymerase I dependent transcription of the rDNA locus, through the recruitment of the SIN3/HDAC1 corepressor complex to the rDNA promoter. Essential component of the WICH-5 ISWI chromatin-remodeling complex (also called the WICH complex), a chromatin-remodeling complex that mobilizes nucleosomes and reconfigures irregular chromatin to a regular nucleosomal array structure. The WICH-5 ISWI chromatin-remodeling complex regulates the transcription of various genes, has a role in RNA polymerase I transcription. Within the B-WICH complex has a role in RNA polymerase III transcription. Mediates the histone H2AX phosphorylation at 'Tyr-142', and is involved in the maintenance of chromatin structures during DNA replication processes. Essential component of NoRC-5 ISWI chromatin-remodeling complex, a complex that mediates silencing of a fraction of rDNA by recruiting histone-modifying enzymes and DNA methyltransferases, leading to heterochromatin formation and transcriptional silencing. The protein is SWI/SNF-related matrix-associated actin-dependent regulator of chromatin subfamily A member 5 of Homo sapiens (Human).